The sequence spans 186 residues: Casparian strip membrane protein 3 (186 aa).

Residues 1–26 are Cytoplasmic-facing; sequence MKGSSEHGETSKAAPLGRGGVSKGVS. Residues 27 to 47 form a helical membrane-spanning segment; it reads VLDLILRFIAIIGTLASAIAM. Topologically, residues 48–74 are extracellular; it reads GTTNETLPFFTQFIRFKAQYSDLPTLT. A glycan (N-linked (GlcNAc...) asparagine) is linked at N51. The helical transmembrane segment at 75 to 95 threads the bilayer; that stretch reads FFVVANSIVCAYLILSLPLSI. Over 96 to 107 the chain is Cytoplasmic; the sequence is VHIIRSRAKYSR. A helical membrane pass occupies residues 108 to 128; the sequence is LLLIFLDAAMLALVTAGASAA. The Extracellular segment spans residues 129–161; that stretch reads AAIVYLAHKGNVRANWLAICQQFDSFCERISGS. A helical membrane pass occupies residues 162–182; sequence LIGSFGAMVMLILLILLSAIA. Topologically, residues 183–186 are cytoplasmic; it reads LARR.

It belongs to the Casparian strip membrane proteins (CASP) family. In terms of assembly, homodimer and heterodimers.

It is found in the cell membrane. In terms of biological role, regulates membrane-cell wall junctions and localized cell wall deposition. Required for establishment of the Casparian strip membrane domain (CSD) and the subsequent formation of Casparian strips, a cell wall modification of the root endodermis that determines an apoplastic barrier between the intraorganismal apoplasm and the extraorganismal apoplasm and prevents lateral diffusion. The protein is Casparian strip membrane protein 3 of Sorghum bicolor (Sorghum).